The sequence spans 298 residues: Mitochondrial dicarboxylate transporter (298 aa).

Solcar repeat units follow at residues 11-95 (KNIK…LKEN), 103-195 (TNMA…FKNY), and 205-289 (SKNY…LKKH). Helical transmembrane passes span 17–37 (WWYG…LDLA), 58–76 (ILAN…AAVL), 105–126 (MAYL…GNFA), 170–189 (GWKP…VVTY), 211–231 (LTAS…ADVM), and 265–283 (WLPS…FFAI).

It belongs to the mitochondrial carrier (TC 2.A.29) family. As to quaternary structure, homodimer. Binds to the TIM22 translocation complex during import.

It is found in the mitochondrion inner membrane. Functionally, mitochondrial dicarboxylic transporter catalyzing the exchange of dicarboxylic acids like malate and succinate for inorganic phosphate. Required for growth on ethanol and acetate. This chain is Mitochondrial dicarboxylate transporter (DIC1), found in Saccharomyces cerevisiae (strain ATCC 204508 / S288c) (Baker's yeast).